Here is a 203-residue protein sequence, read N- to C-terminus: MSAPRIGVLALQGDVREHVRALREAGADAGEVRRAGELAELDGLVLPGGESTTIGRLLRVFDLLEPLRAAVAGGLPVFGSCAGMILLAQDVIDGRPGQPLIGGLDVVVRRNAFGRQVESFETDLVVDGVDGPAVHAVFIRAPWVEKAGDGVEVLARVADRPVAVRQGPLLATSFHPELTGDIRVHRLFVEIVRSELGLKRGRS.

49-51 is a binding site for L-glutamine; it reads GES. Cys81 serves as the catalytic Nucleophile. Residues Arg110 and 139-140 contribute to the L-glutamine site; that span reads IR. Active-site charge relay system residues include His175 and Glu177.

Belongs to the glutaminase PdxT/SNO family. As to quaternary structure, in the presence of PdxS, forms a dodecamer of heterodimers. Only shows activity in the heterodimer.

It carries out the reaction aldehydo-D-ribose 5-phosphate + D-glyceraldehyde 3-phosphate + L-glutamine = pyridoxal 5'-phosphate + L-glutamate + phosphate + 3 H2O + H(+). It catalyses the reaction L-glutamine + H2O = L-glutamate + NH4(+). Its pathway is cofactor biosynthesis; pyridoxal 5'-phosphate biosynthesis. Catalyzes the hydrolysis of glutamine to glutamate and ammonia as part of the biosynthesis of pyridoxal 5'-phosphate. The resulting ammonia molecule is channeled to the active site of PdxS. The chain is Pyridoxal 5'-phosphate synthase subunit PdxT from Parafrankia sp. (strain EAN1pec).